The following is a 481-amino-acid chain: Delta 4,5-hexuronate-2-O-sulfatase (481 aa).

Serine 64 carries the 3-oxoalanine (Ser) modification. Zn(2+) is bound by residues cysteine 225, cysteine 226, histidine 462, and histidine 469. Residues 453-481 (VDADPRCRNHTPGYPSHEGPGAREILKRK) form a disordered region. Positions 472–481 (PGAREILKRK) are enriched in basic and acidic residues.

Belongs to the sulfatase family. Zn(2+) serves as cofactor. The conversion to 3-oxoalanine (also known as C-formylglycine, FGly), of a serine or cysteine residue in prokaryotes and of a cysteine residue in eukaryotes, is critical for catalytic activity.

Its function is as follows. Exosulfatase involved in the degradation of the glycosaminoglycans (GAGs) chondroitin sulfate (CS), dermatan sulfate (DS) and heparan sulfate (HS). 2-O-sulfatase active on unsaturated non-reducing end hexuronate units. Has a slight preference for HS-derived structures. GAG-specific sulfatases play a key role in the persistence of the major human gut symbiont B.thetaiotaomicron in the host gastrointestinal tract. The sequence is that of Delta 4,5-hexuronate-2-O-sulfatase from Bacteroides thetaiotaomicron (strain ATCC 29148 / DSM 2079 / JCM 5827 / CCUG 10774 / NCTC 10582 / VPI-5482 / E50).